A 351-amino-acid chain; its full sequence is Nicotinate-nucleotide--dimethylbenzimidazole phosphoribosyltransferase (351 aa).

Residue E317 is the Proton acceptor of the active site.

Belongs to the CobT family.

It catalyses the reaction 5,6-dimethylbenzimidazole + nicotinate beta-D-ribonucleotide = alpha-ribazole 5'-phosphate + nicotinate + H(+). It participates in nucleoside biosynthesis; alpha-ribazole biosynthesis; alpha-ribazole from 5,6-dimethylbenzimidazole: step 1/2. Functionally, catalyzes the synthesis of alpha-ribazole-5'-phosphate from nicotinate mononucleotide (NAMN) and 5,6-dimethylbenzimidazole (DMB). This chain is Nicotinate-nucleotide--dimethylbenzimidazole phosphoribosyltransferase, found in Pseudomonas fluorescens (strain SBW25).